Here is a 107-residue protein sequence, read N- to C-terminus: UPF0122 protein STH1464 (107 aa).

Belongs to the UPF0122 family.

In terms of biological role, might take part in the signal recognition particle (SRP) pathway. This is inferred from the conservation of its genetic proximity to ftsY/ffh. May be a regulatory protein. The sequence is that of UPF0122 protein STH1464 from Symbiobacterium thermophilum (strain DSM 24528 / JCM 14929 / IAM 14863 / T).